The sequence spans 192 residues: UPF0312 protein Avin_03250 (192 aa).

An N-terminal signal peptide occupies residues methionine 1–alanine 23.

It belongs to the UPF0312 family. Type 1 subfamily.

The protein resides in the periplasm. The protein is UPF0312 protein Avin_03250 of Azotobacter vinelandii (strain DJ / ATCC BAA-1303).